We begin with the raw amino-acid sequence, 122 residues long: Large ribosomal subunit protein uL14 (122 aa).

This sequence belongs to the universal ribosomal protein uL14 family. Part of the 50S ribosomal subunit. Forms a cluster with proteins L3 and L19. In the 70S ribosome, L14 and L19 interact and together make contacts with the 16S rRNA in bridges B5 and B8.

In terms of biological role, binds to 23S rRNA. Forms part of two intersubunit bridges in the 70S ribosome. The chain is Large ribosomal subunit protein uL14 from Picosynechococcus sp. (strain ATCC 27264 / PCC 7002 / PR-6) (Agmenellum quadruplicatum).